A 580-amino-acid polypeptide reads, in one-letter code: E3 ubiquitin-protein ligase TRIM45 (580 aa).

Residues 29 to 98 form an RING-type zinc finger; it reads CPLCLGLFKA…QIGILCPVCD (70 aa). 2 B box-type zinc fingers span residues 130–176 and 186–227; these read GQGL…MVDL and GKPI…CDFT. 8 residues coordinate Zn(2+): Cys-135, Cys-138, Cys-158, His-162, Cys-191, His-194, Cys-214, and His-219. Residues 281–335 adopt a coiled-coil conformation; it reads SEGYIKAIEEHRDKLLKQLEDIRAQKENSLQLQKAQLEQLLADMRTGVEFTEHLL. One copy of the Filamin repeat lies at 394–497; the sequence is TKEVDPAKCV…VQGSPFTVMV (104 aa).

The protein belongs to the TRIM/RBCC family. As to expression, expressed in skeletal muscle, brain, heart and pancreas.

It is found in the cytoplasm. The protein localises to the nucleus. It catalyses the reaction S-ubiquitinyl-[E2 ubiquitin-conjugating enzyme]-L-cysteine + [acceptor protein]-L-lysine = [E2 ubiquitin-conjugating enzyme]-L-cysteine + N(6)-ubiquitinyl-[acceptor protein]-L-lysine.. Its function is as follows. E3 ubiquitin-protein ligase that plays a role in the regulation of inflammatory response. Mechanistically, mediates the 'Lys-48'-linked polyubiquitination of TAB2, a regulatory protein of the kinase TAK1, leading to its degradation via the proteasomal pathway and inhibition of the TLR-mediated inflammatory immune response. May act as a transcriptional repressor in mitogen-activated protein kinase signaling pathway. This is E3 ubiquitin-protein ligase TRIM45 (TRIM45) from Homo sapiens (Human).